We begin with the raw amino-acid sequence, 211 residues long: Holliday junction resolvase RecU (211 aa).

Mg(2+)-binding residues include threonine 95, aspartate 97, glutamate 110, and glutamine 129.

It belongs to the RecU family. Mg(2+) is required as a cofactor.

Its subcellular location is the cytoplasm. The catalysed reaction is Endonucleolytic cleavage at a junction such as a reciprocal single-stranded crossover between two homologous DNA duplexes (Holliday junction).. Its function is as follows. Endonuclease that resolves Holliday junction intermediates in genetic recombination. Cleaves mobile four-strand junctions by introducing symmetrical nicks in paired strands. Promotes annealing of linear ssDNA with homologous dsDNA. Required for DNA repair, homologous recombination and chromosome segregation. In Lactobacillus acidophilus (strain ATCC 700396 / NCK56 / N2 / NCFM), this protein is Holliday junction resolvase RecU.